A 227-amino-acid chain; its full sequence is Cytidylate kinase (227 aa).

Position 12 to 20 (Gly12 to Thr20) interacts with ATP.

It belongs to the cytidylate kinase family. Type 1 subfamily.

It is found in the cytoplasm. The enzyme catalyses CMP + ATP = CDP + ADP. The catalysed reaction is dCMP + ATP = dCDP + ADP. This chain is Cytidylate kinase, found in Shewanella denitrificans (strain OS217 / ATCC BAA-1090 / DSM 15013).